Reading from the N-terminus, the 215-residue chain is uncharacterized protein (215 aa).

Residues 1 to 29 form the signal peptide; it reads MDKVQSGFLILFLFLMECQLHLCLPYADG. Over 30–100 the chain is Extracellular; sequence LHPTGNITGL…IIRHRPALVK (71 aa). A helical transmembrane segment spans residues 101–121; that stretch reads VILISSVAFSIALICGMAISY. Residues 122-215 lie on the Cytoplasmic side of the membrane; sequence MIYRLAQAEE…ASHNGKMEDL (94 aa). The segment at 191–215 is disordered; that stretch reads LKEEQNSVTENKTKNASHNGKMEDL. Residues 196-208 are compositionally biased toward polar residues; it reads NSVTENKTKNASH.

Its subcellular location is the membrane. This is an uncharacterized protein from Homo sapiens (Human).